A 167-amino-acid polypeptide reads, in one-letter code: Troponin C-akin-1 protein (167 aa).

17–20 contacts substrate; that stretch reads YGAL. The Proton acceptor role is filled by Glu-92.

Belongs to the gamma-glutamylcyclotransferase family. As to expression, in embryos, expression is seen in heart cells of the dorsal vessel and hindgut visceral mesoderm.

Putative gamma-glutamylcyclotransferase. In Drosophila melanogaster (Fruit fly), this protein is Troponin C-akin-1 protein (Tina-1).